Reading from the N-terminus, the 144-residue chain is Cysteine desulfuration protein SufE (144 aa).

The active-site Cysteine persulfide intermediate is C51.

It belongs to the SufE family. In terms of assembly, homodimer. Interacts with SufS.

It localises to the cytoplasm. Its pathway is cofactor biosynthesis; iron-sulfur cluster biosynthesis. Its function is as follows. Participates in cysteine desulfuration mediated by SufS. Cysteine desulfuration mobilizes sulfur from L-cysteine to yield L-alanine and constitutes an essential step in sulfur metabolism for biosynthesis of a variety of sulfur-containing biomolecules. Functions as a sulfur acceptor for SufS, by mediating the direct transfer of the sulfur atom from the S-sulfanylcysteine of SufS, an intermediate product of cysteine desulfuration process. The protein is Cysteine desulfuration protein SufE of Wigglesworthia glossinidia brevipalpis.